The following is a 243-amino-acid chain: Small ribosomal subunit protein uS2 (243 aa).

The protein belongs to the universal ribosomal protein uS2 family.

This chain is Small ribosomal subunit protein uS2, found in Aliivibrio salmonicida (strain LFI1238) (Vibrio salmonicida (strain LFI1238)).